A 461-amino-acid polypeptide reads, in one-letter code: Cysteine--tRNA ligase (461 aa).

Position 27 (Cys-27) interacts with Zn(2+). The 'HIGH' region motif lies at 29-39 (ITVYDYCHIGH). Zn(2+) contacts are provided by Cys-208, His-233, and Glu-237. The 'KMSKS' region signature appears at 265–269 (KMSKS). Lys-268 lines the ATP pocket.

Belongs to the class-I aminoacyl-tRNA synthetase family. Monomer. It depends on Zn(2+) as a cofactor.

Its subcellular location is the cytoplasm. The catalysed reaction is tRNA(Cys) + L-cysteine + ATP = L-cysteinyl-tRNA(Cys) + AMP + diphosphate. The sequence is that of Cysteine--tRNA ligase from Chromohalobacter salexigens (strain ATCC BAA-138 / DSM 3043 / CIP 106854 / NCIMB 13768 / 1H11).